The primary structure comprises 182 residues: MATTRLKSLYQETIVPKLINQFQYTNVHQVPKLVKVTINRGLGEAAQNAKSLEASINEIALVTGQKPVVTRAKKAIAGFKIRQGMPVGIMVTLRAERMYAFFDRLVSLSLPRIRDFRGVSPKSFDGRGNYTLGVREQLIFPEVEYDSVDQVRGMDISIITTAKNDEEGRALLKELGMPFRDQ.

Belongs to the universal ribosomal protein uL5 family. In terms of assembly, part of the 50S ribosomal subunit; part of the 5S rRNA/L5/L18/L25 subcomplex. Contacts the 5S rRNA and the P site tRNA. Forms a bridge to the 30S subunit in the 70S ribosome.

Functionally, this is one of the proteins that bind and probably mediate the attachment of the 5S RNA into the large ribosomal subunit, where it forms part of the central protuberance. In the 70S ribosome it contacts protein S13 of the 30S subunit (bridge B1b), connecting the 2 subunits; this bridge is implicated in subunit movement. Contacts the P site tRNA; the 5S rRNA and some of its associated proteins might help stabilize positioning of ribosome-bound tRNAs. The polypeptide is Large ribosomal subunit protein uL5 (Nostoc punctiforme (strain ATCC 29133 / PCC 73102)).